The primary structure comprises 657 residues: MRLKIGFILRSLLVVGSFLGLVVLWSSLTPRPDDPSPLSRMREDRDVNDPMPNRGGNGLAPGEDRFKPVVPWPHVEGVEVDLESIRRKNKAKNEQEHHAGGDSQKDIMQRQYLTFKPQTFTYRDPVLRPGILGNFEPKEPEPPGVVGGPGEKAKPLVLGPEFKQAIQASIKEFGFNMVASDMISLDRSVNDLRQEECKYWHYDENLLTSSVVIVFHNEGWSTLMRTVHSVIKRTPRKYLAEIVLIDDFSNKEHLKEKLDEYIKLWNGLVKVFRNERREGLIQARSIGAQKAKLGQVLIYLDAHCEVAVNWYAPLVAPISKDRTICTVPLIDVINGNTYEIIPQGGGDEDGYARGAWDWSMLWKRVPLTPQEKRLRKTKTEPYRSPAMAGGLFAIEREFFFELGLYDPGLQIWGGENFEISYKIWQCGGKLLFVPCSRVGHIYRLEGWQGNPPPIYVGSSPTLKNYVRVVEVWWDEYKDYFYASRPESQALPYGDISELKKFREDHNCKSFKWFMEEIAYDITSHYPLPPKNVDWGEIRGFETAYCIDSMGKTNGGFVELGPCHRMGGNQLFRINEANQLMQYDQCLTKGADGSKVMITHCNLNEFKEWQYFKNLHRFTHIPSGKCLDRSEVLHQVFISNCDSSKTTQKWEMNNIHSV.

The Cytoplasmic segment spans residues 1–6 (MRLKIG). A helical; Signal-anchor for type II membrane protein transmembrane segment spans residues 7 to 29 (FILRSLLVVGSFLGLVVLWSSLT). Over 30–657 (PRPDDPSPLS…KWEMNNIHSV (628 aa)) the chain is Lumenal. The disordered stretch occupies residues 31–66 (RPDDPSPLSRMREDRDVNDPMPNRGGNGLAPGEDRF). 5 disulfides stabilise this stretch: Cys-197-Cys-435, Cys-426-Cys-507, Cys-545-Cys-562, Cys-585-Cys-600, and Cys-625-Cys-640. Positions 206–317 (LLTSSVVIVF…VNWYAPLVAP (112 aa)) are catalytic subdomain A. Residues Asp-247 and Arg-277 each coordinate substrate. Residues Asp-301 and His-303 each coordinate Mn(2+). Residues 381–443 (PYRSPAMAGG…PCSRVGHIYR (63 aa)) are catalytic subdomain B. Trp-412 is a substrate binding site. Mn(2+) is bound at residue His-440. Arg-443 contributes to the substrate binding site. The 121-residue stretch at 532 to 652 (VDWGEIRGFE…SKTTQKWEMN (121 aa)) folds into the Ricin B-type lectin domain.

The protein belongs to the glycosyltransferase 2 family. GalNAc-T subfamily. Mn(2+) serves as cofactor.

It localises to the golgi apparatus membrane. The enzyme catalyses L-seryl-[protein] + UDP-N-acetyl-alpha-D-galactosamine = a 3-O-[N-acetyl-alpha-D-galactosaminyl]-L-seryl-[protein] + UDP + H(+). It carries out the reaction L-threonyl-[protein] + UDP-N-acetyl-alpha-D-galactosamine = a 3-O-[N-acetyl-alpha-D-galactosaminyl]-L-threonyl-[protein] + UDP + H(+). Its pathway is protein modification; protein glycosylation. Glycopeptide transferase involved in O-linked oligosaccharide biosynthesis, which catalyzes the transfer of an N-acetyl-D-galactosamine residue to an already glycosylated peptide. In contrast to other proteins of the family, it does not act as a peptide transferase that transfers GalNAc onto serine or threonine residue on the protein receptor, but instead requires the prior addition of a GalNAc on a peptide before adding additional GalNAc moieties. Some peptide transferase activity is however not excluded, considering that its appropriate peptide substrate may remain unidentified. This chain is N-acetylgalactosaminyltransferase 7 (GALNT7), found in Pongo abelii (Sumatran orangutan).